A 145-amino-acid chain; its full sequence is uncharacterized protein (145 aa).

This is an uncharacterized protein from Homo sapiens (Human).